The sequence spans 372 residues: GDSL esterase/lipase At5g45910 (372 aa).

The signal sequence occupies residues 1–19 (MRINMLFIVAFSFLVSVRS). The Nucleophile role is filled by Ser37. Asn66, Asn101, and Asn137 each carry an N-linked (GlcNAc...) asparagine glycan. Catalysis depends on residues Asp345 and His348.

Belongs to the 'GDSL' lipolytic enzyme family.

It is found in the secreted. This chain is GDSL esterase/lipase At5g45910, found in Arabidopsis thaliana (Mouse-ear cress).